We begin with the raw amino-acid sequence, 245 residues long: Ribonuclease PH (245 aa).

Phosphate-binding positions include Arg86 and 124-126 (GTR).

It belongs to the RNase PH family. Homohexameric ring arranged as a trimer of dimers.

The enzyme catalyses tRNA(n+1) + phosphate = tRNA(n) + a ribonucleoside 5'-diphosphate. In terms of biological role, phosphorolytic 3'-5' exoribonuclease that plays an important role in tRNA 3'-end maturation. Removes nucleotide residues following the 3'-CCA terminus of tRNAs; can also add nucleotides to the ends of RNA molecules by using nucleoside diphosphates as substrates, but this may not be physiologically important. Probably plays a role in initiation of 16S rRNA degradation (leading to ribosome degradation) during starvation. The chain is Ribonuclease PH from Bacillus cytotoxicus (strain DSM 22905 / CIP 110041 / 391-98 / NVH 391-98).